A 100-amino-acid polypeptide reads, in one-letter code: Urease subunit gamma (100 aa).

It belongs to the urease gamma subunit family. In terms of assembly, heterotrimer of UreA (gamma), UreB (beta) and UreC (alpha) subunits. Three heterotrimers associate to form the active enzyme.

It is found in the cytoplasm. It carries out the reaction urea + 2 H2O + H(+) = hydrogencarbonate + 2 NH4(+). The protein operates within nitrogen metabolism; urea degradation; CO(2) and NH(3) from urea (urease route): step 1/1. In Tolumonas auensis (strain DSM 9187 / NBRC 110442 / TA 4), this protein is Urease subunit gamma.